Consider the following 570-residue polypeptide: MHMSEIMEMLIRRGFLWQSFEIYGGMAGFIDYAPLGNNLRRKIENIWRKYFVINERAAEIDTPTIGIEEVFIASGHATSFTDVAIECENCGRVYRADHYVKEKLGIEVDETVEAVKEVMEVYDLKCECGGRFKDPAPMNLMFSTTIGPGKGKKGYLRPETAQGMFVDFKRLANFFREKLPFGVAQIGRAYRNEISPRQGVIRLREFNQAELEFFVHPGEKKHPHFSLYAKDVVKLVDKFDSQHEITLEEAVEKGIIANQILAYFIGKTRRFLLEIGIKDEKLRFRQHKDVERAHYATDCWDAEVLTSYGWIEVVGIADRTNYDLKRHSKFSGEDLSVFVPYEEPVKVKRRKIVPILSKLGPEFRQKAKKVAEALEALNVEADLDEVEVEVDGEKVKVTKEFFEIQEVEEEVTGEKVIPHVIEPSFGLDRITYSVLEHAFDKDVVDGEERRVLRLKRWVSPIEVAVLPLLSREPFESKGMEIVQMLREEGIFTDYDDSGSIGRRYRRFDEIGTPFCVTVDHQTFEDETVTIRDRDTTAQVRVKLGELPSILKELLRSEKDITEFGEVFRQV.

Substrate is bound by residues Arg-95 and Glu-159. Residues 191 to 193 (RNE), 201 to 206 (IRLREF), 312 to 313 (EV), and 426 to 429 (GLDR) each bind ATP. 206–210 (FNQAE) contacts substrate. 422–426 (EPSFG) serves as a coordination point for substrate.

Belongs to the class-II aminoacyl-tRNA synthetase family.

It localises to the cytoplasm. It carries out the reaction tRNA(Gly) + glycine + ATP = glycyl-tRNA(Gly) + AMP + diphosphate. Its function is as follows. Catalyzes the attachment of glycine to tRNA(Gly). This chain is Glycine--tRNA ligase, found in Archaeoglobus fulgidus (strain ATCC 49558 / DSM 4304 / JCM 9628 / NBRC 100126 / VC-16).